Reading from the N-terminus, the 206-residue chain is Small ribosomal subunit protein uS4 (206 aa).

The 61-residue stretch at 96–156 (GRLDNVVYRM…EKSKKQARIK (61 aa)) folds into the S4 RNA-binding domain.

This sequence belongs to the universal ribosomal protein uS4 family. As to quaternary structure, part of the 30S ribosomal subunit. Contacts protein S5. The interaction surface between S4 and S5 is involved in control of translational fidelity.

One of the primary rRNA binding proteins, it binds directly to 16S rRNA where it nucleates assembly of the body of the 30S subunit. Functionally, with S5 and S12 plays an important role in translational accuracy. The chain is Small ribosomal subunit protein uS4 from Haemophilus influenzae (strain 86-028NP).